The chain runs to 523 residues: Probable 3-ketoacyl-CoA synthase 20 (523 aa).

A run of 2 helical transmembrane segments spans residues 31 to 55 and 78 to 96; these read IVAV…AAGG and ALAV…YAAS. Positions 93–382 constitute an FAE domain; the sequence is YAASRPRPVY…RFLATVVLKR (290 aa). Catalysis depends on residues cysteine 237, histidine 317, histidine 401, histidine 405, and asparagine 438.

This sequence belongs to the thiolase-like superfamily. Chalcone/stilbene synthases family. In terms of tissue distribution, highly expressed in leaf sheaths. Expressed in leaves, flag leaves and panicles.

The protein resides in the membrane. The catalysed reaction is a very-long-chain acyl-CoA + malonyl-CoA + H(+) = a very-long-chain 3-oxoacyl-CoA + CO2 + CoA. Its function is as follows. Contributes to fatty acids elongation. Plays a role in controlling leaf anatomy and plant architecture. This is Probable 3-ketoacyl-CoA synthase 20 from Oryza sativa subsp. japonica (Rice).